Here is a 104-residue protein sequence, read N- to C-terminus: Large ribosomal subunit protein uL24 (104 aa).

This sequence belongs to the universal ribosomal protein uL24 family. Part of the 50S ribosomal subunit.

One of two assembly initiator proteins, it binds directly to the 5'-end of the 23S rRNA, where it nucleates assembly of the 50S subunit. Its function is as follows. One of the proteins that surrounds the polypeptide exit tunnel on the outside of the subunit. The protein is Large ribosomal subunit protein uL24 of Neorickettsia sennetsu (strain ATCC VR-367 / Miyayama) (Ehrlichia sennetsu).